Here is a 157-residue protein sequence, read N- to C-terminus: 2-C-methyl-D-erythritol 2,4-cyclodiphosphate synthase (157 aa).

Asp8 and His10 together coordinate a divalent metal cation. 4-CDP-2-C-methyl-D-erythritol 2-phosphate is bound by residues 8 to 10 and 34 to 35; these read DVH and HS. Position 42 (His42) interacts with a divalent metal cation. 4-CDP-2-C-methyl-D-erythritol 2-phosphate is bound by residues 56–58, 61–65, 132–135, and Phe139; these read DIG, FPDTD, and TTEE.

This sequence belongs to the IspF family. In terms of assembly, homotrimer. It depends on a divalent metal cation as a cofactor.

It catalyses the reaction 4-CDP-2-C-methyl-D-erythritol 2-phosphate = 2-C-methyl-D-erythritol 2,4-cyclic diphosphate + CMP. Its pathway is isoprenoid biosynthesis; isopentenyl diphosphate biosynthesis via DXP pathway; isopentenyl diphosphate from 1-deoxy-D-xylulose 5-phosphate: step 4/6. In terms of biological role, involved in the biosynthesis of isopentenyl diphosphate (IPP) and dimethylallyl diphosphate (DMAPP), two major building blocks of isoprenoid compounds. Catalyzes the conversion of 4-diphosphocytidyl-2-C-methyl-D-erythritol 2-phosphate (CDP-ME2P) to 2-C-methyl-D-erythritol 2,4-cyclodiphosphate (ME-CPP) with a corresponding release of cytidine 5-monophosphate (CMP). The protein is 2-C-methyl-D-erythritol 2,4-cyclodiphosphate synthase of Clostridium botulinum (strain Eklund 17B / Type B).